The sequence spans 76 residues: Small ribosomal subunit protein bS18 (76 aa).

The protein belongs to the bacterial ribosomal protein bS18 family. As to quaternary structure, part of the 30S ribosomal subunit. Forms a tight heterodimer with protein bS6.

Functionally, binds as a heterodimer with protein bS6 to the central domain of the 16S rRNA, where it helps stabilize the platform of the 30S subunit. This is Small ribosomal subunit protein bS18 from Methylococcus capsulatus (strain ATCC 33009 / NCIMB 11132 / Bath).